The sequence spans 188 residues: NADH-quinone oxidoreductase subunit I (188 aa).

2 4Fe-4S ferredoxin-type domains span residues 44–74 (LNRY…VEGA) and 90–119 (RVYQ…MTNE). Residues cysteine 54, cysteine 57, cysteine 60, cysteine 64, cysteine 99, cysteine 102, cysteine 105, and cysteine 109 each contribute to the [4Fe-4S] cluster site. Positions 144–188 (GMVDSPHPMAPGTTAEDYYRGTVTGGAAPASQDEPEADDTAGDRP) are disordered. Positions 176–188 (DEPEADDTAGDRP) are enriched in acidic residues.

The protein belongs to the complex I 23 kDa subunit family. As to quaternary structure, NDH-1 is composed of 14 different subunits. Subunits NuoA, H, J, K, L, M, N constitute the membrane sector of the complex. Requires [4Fe-4S] cluster as cofactor.

It is found in the cell membrane. The catalysed reaction is a quinone + NADH + 5 H(+)(in) = a quinol + NAD(+) + 4 H(+)(out). In terms of biological role, NDH-1 shuttles electrons from NADH, via FMN and iron-sulfur (Fe-S) centers, to quinones in the respiratory chain. The immediate electron acceptor for the enzyme in this species is believed to be ubiquinone. Couples the redox reaction to proton translocation (for every two electrons transferred, four hydrogen ions are translocated across the cytoplasmic membrane), and thus conserves the redox energy in a proton gradient. The protein is NADH-quinone oxidoreductase subunit I of Rhodococcus opacus (strain B4).